The primary structure comprises 482 residues: uncharacterized protein (482 aa).

A run of 12 helical transmembrane segments spans residues 40-57 (LDWY…LSFL), 83-103 (AAVS…VLLV), 109-129 (HYYL…TCFV), 140-160 (LLLG…ISMT), 170-190 (LAYL…IATG), 205-225 (WLYI…LFCL), 278-298 (VIQF…PSIL), 311-331 (YMSV…CLLS), 338-358 (GWFI…LLAT), 366-386 (VATY…ITWI), 399-418 (ALGC…GQVY), and 428-448 (GFAL…RFYL).

This sequence belongs to the major facilitator superfamily. Allantoate permease family.

The protein localises to the endoplasmic reticulum. It is found in the membrane. This is an uncharacterized protein from Schizosaccharomyces pombe (strain 972 / ATCC 24843) (Fission yeast).